The primary structure comprises 346 residues: 2,5-dichlorohydroquinone reductive dechlorinase (346 aa).

Residues 43-154 (PRFELFHFVF…YLCDALSGGT (112 aa)) form the GST N-terminal domain. In terms of domain architecture, GST C-terminal spans 189-335 (DRRPESMQAV…AIIQWPGHPP (147 aa)).

Belongs to the GST superfamily.

The catalysed reaction is 2,5-dichlorohydroquinone + 2 glutathione = chlorohydroquinone + glutathione disulfide + chloride + H(+). The enzyme catalyses chlorohydroquinone + 2 glutathione = hydroquinone + glutathione disulfide + chloride + H(+). The protein operates within xenobiotic degradation; gamma-hexachlorocyclohexane degradation. Its function is as follows. Catalyzes the degradation of 2,5-dichlorohydroquinone (2,5-DCHQ) into hydroquinone (HQ) via chlorohydroquinone (CHQ). Is involved in the degradation pathway that allows S.japonicum UT26 to grow on gamma-hexachlorocyclohexane (gamma-HCH or lindane) as the sole source of carbon and energy. However, the conversion of CHQ to HQ by LinD seems not to be essential for this degradation pathway, because the conversion rate of CHQ to HQ is much lower than that of 2,5-DCHQ to CHQ. CHQ is more efficiently degraded by LinE in strain UT26. The chain is 2,5-dichlorohydroquinone reductive dechlorinase from Sphingobium indicum (strain DSM 16413 / CCM 7287 / MTCC 6362 / UT26 / NBRC 101211 / UT26S) (Sphingobium japonicum).